The chain runs to 559 residues: 5'-AMP-activated protein kinase catalytic subunit alpha-1 (559 aa).

In terms of domain architecture, Protein kinase spans 27–279 (YILGDTLGVG…IKDIREHEWF (253 aa)). The residue at position 32 (T32) is a Phosphothreonine. Residues 33 to 41 (LGVGTFGKV) and K56 each bind ATP. D150 acts as the Proton acceptor in catalysis. T183 carries the post-translational modification Phosphothreonine; by LKB1 and CaMKK2. A phosphothreonine mark is found at T269 and T355. The segment at 302–381 (EALKEVCEKF…PERVPFLVAE (80 aa)) is AIS. The residue at position 356 (S356) is a Phosphoserine. Residue S360 is modified to Phosphoserine; by ULK1. T368 is subject to Phosphothreonine; by ULK1. Phosphothreonine is present on T382. At S397 the chain carries Phosphoserine; by ULK1. S467 and S486 each carry phosphoserine. Residues 484–536 (AKSGTATPQRSGSISNYRSCQRSDSDAEAQGKPSEVSLTSSVTSLDSSPVDVA) are disordered. Residues 485-505 (KSGTATPQRSGSISNYRSCQR) show a composition bias toward polar residues. S486 bears the Phosphoserine; by ULK1 mark. T488 is modified (phosphothreonine; by ULK1). T490 carries the phosphothreonine modification. Phosphoserine is present on residues S496, S508, S524, and S527. Over residues 516–535 (PSEVSLTSSVTSLDSSPVDV) the composition is skewed to low complexity.

Belongs to the protein kinase superfamily. CAMK Ser/Thr protein kinase family. SNF1 subfamily. As to quaternary structure, AMPK is a heterotrimer of an alpha catalytic subunit (PRKAA1 or PRKAA2), a beta (PRKAB1 or PRKAB2) and a gamma non-catalytic subunits (PRKAG1, PRKAG2 or PRKAG3). Interacts with FNIP1 and FNIP2. It depends on Mg(2+) as a cofactor. In terms of processing, ubiquitinated. Phosphorylated at Thr-183 by STK11/LKB1 in complex with STE20-related adapter-alpha (STRADA) pseudo kinase and CAB39. Also phosphorylated at Thr-183 by CAMKK2; triggered by a rise in intracellular calcium ions, without detectable changes in the AMP/ATP ratio. CAMKK1 can also phosphorylate Thr-183, but at a much lower level. Dephosphorylated by protein phosphatase 2A and 2C (PP2A and PP2C). Phosphorylated by ULK1 and ULK2; leading to negatively regulate AMPK activity and suggesting the existence of a regulatory feedback loop between ULK1, ULK2 and AMPK. There is some ambiguity for some phosphosites: Ser-360/Thr-368 and Ser-486/Thr-488. Dephosphorylated by PPM1A and PPM1B. Post-translationally, glycosylated; O-GlcNAcylated by OGT, promoting the AMP-activated protein kinase (AMPK) activity. As to expression, low expression in kidney, liver, lung, heart and brain.

It localises to the cytoplasm. It is found in the nucleus. It carries out the reaction L-seryl-[protein] + ATP = O-phospho-L-seryl-[protein] + ADP + H(+). The enzyme catalyses L-threonyl-[protein] + ATP = O-phospho-L-threonyl-[protein] + ADP + H(+). The catalysed reaction is L-seryl-[acetyl-CoA carboxylase] + ATP = O-phospho-L-seryl-[acetyl-CoA carboxylase] + ADP + H(+). It catalyses the reaction L-seryl-[3-hydroxy-3-methylglutaryl-coenzyme A reductase] + ATP = O-phospho-L-seryl-[3-hydroxy-3-methylglutaryl-coenzyme A reductase] + ADP + H(+). It carries out the reaction L-seryl-[tau protein] + ATP = O-phospho-L-seryl-[tau protein] + ADP + H(+). The enzyme catalyses L-threonyl-[tau protein] + ATP = O-phospho-L-threonyl-[tau protein] + ADP + H(+). Its activity is regulated as follows. Activated by phosphorylation on Thr-183. Binding of AMP to non-catalytic gamma subunit (PRKAG1, PRKAG2 or PRKAG3) results in allosteric activation, inducing phosphorylation on Thr-183. AMP-binding to gamma subunit also sustains activity by preventing dephosphorylation of Thr-183. ADP also stimulates Thr-183 phosphorylation, without stimulating already phosphorylated AMPK. ATP promotes dephosphorylation of Thr-183, rendering the enzyme inactive. Under physiological conditions AMPK mainly exists in its inactive form in complex with ATP, which is much more abundant than AMP. Selectively inhibited by compound C (6-[4-(2-Piperidin-1-yl-ethoxy)-phenyl)]-3-pyridin-4-yl-pyyrazolo[1,5-a] pyrimidine. Activated by resveratrol, a natural polyphenol present in red wine, and S17834, a synthetic polyphenol. Its function is as follows. Catalytic subunit of AMP-activated protein kinase (AMPK), an energy sensor protein kinase that plays a key role in regulating cellular energy metabolism. In response to reduction of intracellular ATP levels, AMPK activates energy-producing pathways and inhibits energy-consuming processes: inhibits protein, carbohydrate and lipid biosynthesis, as well as cell growth and proliferation. AMPK acts via direct phosphorylation of metabolic enzymes, and by longer-term effects via phosphorylation of transcription regulators. Regulates lipid synthesis by phosphorylating and inactivating lipid metabolic enzymes such as ACACA, ACACB, GYS1, HMGCR and LIPE; regulates fatty acid and cholesterol synthesis by phosphorylating acetyl-CoA carboxylase (ACACA and ACACB) and hormone-sensitive lipase (LIPE) enzymes, respectively. Promotes lipolysis of lipid droplets by mediating phosphorylation of isoform 1 of CHKA (CHKalpha2). Regulates insulin-signaling and glycolysis by phosphorylating IRS1, PFKFB2 and PFKFB3. AMPK stimulates glucose uptake in muscle by increasing the translocation of the glucose transporter SLC2A4/GLUT4 to the plasma membrane, possibly by mediating phosphorylation of TBC1D4/AS160. Regulates transcription and chromatin structure by phosphorylating transcription regulators involved in energy metabolism such as CRTC2/TORC2, FOXO3, histone H2B, HDAC5, MEF2C, MLXIPL/ChREBP, EP300, HNF4A, p53/TP53, SREBF1, SREBF2 and PPARGC1A. Acts as a key regulator of glucose homeostasis in liver by phosphorylating CRTC2/TORC2, leading to CRTC2/TORC2 sequestration in the cytoplasm. In response to stress, phosphorylates 'Ser-36' of histone H2B (H2BS36ph), leading to promote transcription. Acts as a key regulator of cell growth and proliferation by phosphorylating FNIP1, TSC2, RPTOR, WDR24 and ATG1/ULK1: in response to nutrient limitation, negatively regulates the mTORC1 complex by phosphorylating RPTOR component of the mTORC1 complex and by phosphorylating and activating TSC2. Also phosphorylates and inhibits GATOR2 subunit WDR24 in response to nutrient limitation, leading to suppress glucose-mediated mTORC1 activation. In response to energetic stress, phosphorylates FNIP1, inactivating the non-canonical mTORC1 signaling, thereby promoting nuclear translocation of TFEB and TFE3, and inducing transcription of lysosomal or autophagy genes. In response to nutrient limitation, promotes autophagy by phosphorylating and activating ATG1/ULK1. In that process, it also activates WDR45/WIPI4. Phosphorylates CASP6, thereby preventing its autoprocessing and subsequent activation. In response to nutrient limitation, phosphorylates transcription factor FOXO3 promoting FOXO3 mitochondrial import. Also acts as a regulator of cellular polarity by remodeling the actin cytoskeleton; probably by indirectly activating myosin. AMPK also acts as a regulator of circadian rhythm by mediating phosphorylation of CRY1, leading to destabilize it. May regulate the Wnt signaling pathway by phosphorylating CTNNB1, leading to stabilize it. Also has tau-protein kinase activity: in response to amyloid beta A4 protein (APP) exposure, activated by CAMKK2, leading to phosphorylation of MAPT/TAU; however the relevance of such data remains unclear in vivo. Also phosphorylates CFTR, EEF2K, KLC1, NOS3 and SLC12A1. Regulates hepatic lipogenesis. Activated via SIRT3, represses sterol regulatory element-binding protein (SREBP) transcriptional activities and ATP-consuming lipogenesis to restore cellular energy balance. Upon stress, regulates mitochondrial fragmentation through phosphorylation of MTFR1L. The chain is 5'-AMP-activated protein kinase catalytic subunit alpha-1 (Prkaa1) from Rattus norvegicus (Rat).